The sequence spans 286 residues: MAMEGYRGFLGLLVSALLVGFLSVIFVLIWVLHFREGLGWDGGALEFNWHPVLAVTGFVFIQGIAIIVYRLPWTWKCSKFLMKSIHAGLNAVAAILAIISVVAVFDYHNVRKIPHMYSLHSWVGLTVLILYIQQLVVGFFIFLLPWAPPSLRAIVMPIHVYSGLLLFGTVIATVLMGVTEKLFFVLKNPSYHSFPPEGVFTNTLGLLILVFGALIFWIVTRPQWKRPREPGSIPLQLNGGNADGMEGAIAISSAHNMDAADAELSSEGAARKRTLGLVDTGQRSTM.

The Cytoplasmic portion of the chain corresponds to 1-7 (MAMEGYR). Residues 8-32 (GFLGLLVSALLVGFLSVIFVLIWVL) form a helical membrane-spanning segment. The region spanning 15-220 (SALLVGFLSV…FGALIFWIVT (206 aa)) is the Cytochrome b561 domain. The Extracellular segment spans residues 33-47 (HFREGLGWDGGALEF). The chain crosses the membrane as a helical span at residues 48-69 (NWHPVLAVTGFVFIQGIAIIVY). 3 residues coordinate heme b: histidine 50, arginine 70, and lysine 79. Over 70–78 (RLPWTWKCS) the chain is Cytoplasmic. L-ascorbate contacts are provided by lysine 79 and lysine 83. The chain crosses the membrane as a helical span at residues 79-105 (KFLMKSIHAGLNAVAAILAIISVVAVF). Heme b is bound at residue histidine 86. The Extracellular portion of the chain corresponds to 106–118 (DYHNVRKIPHMYS). Histidine 108 provides a ligand contact to Fe(3+). Heme b contacts are provided by residues 115-118 (HMYS) and histidine 120. The chain crosses the membrane as a helical span at residues 119–144 (LHSWVGLTVLILYIQQLVVGFFIFLL). Residues 145–151 (PWAPPSL) lie on the Cytoplasmic side of the membrane. Arginine 152 is an L-ascorbate binding site. The helical transmembrane segment at 152–179 (RAIVMPIHVYSGLLLFGTVIATVLMGVT) threads the bilayer. Residues histidine 159 and glutamate 180 each contribute to the heme b site. The Extracellular portion of the chain corresponds to 180–197 (EKLFFVLKNPSYHSFPPE). A helical transmembrane segment spans residues 198–222 (GVFTNTLGLLILVFGALIFWIVTRP). At 223-286 (QWKRPREPGS…LVDTGQRSTM (64 aa)) the chain is on the cytoplasmic side. Lysine 225 is a heme b binding site. Serine 232 is modified (phosphoserine). Threonine 285 carries the phosphothreonine modification.

As to quaternary structure, homodimer. Heme b serves as cofactor. Highly expressed in all regions of the small intestine and colon studied in suckling animals. However, after weaning, when iron absorption declines significantly, strong expression is retained only in the duodenum. Also expressed in respiratory epithelium.

It localises to the cell membrane. The protein localises to the apical cell membrane. It carries out the reaction Fe(3+)(out) + L-ascorbate(in) = monodehydro-L-ascorbate radical(in) + Fe(2+)(out) + H(+). The catalysed reaction is Cu(2+)(out) + L-ascorbate(in) = Cu(+)(out) + monodehydro-L-ascorbate radical(in) + H(+). The enzyme catalyses monodehydro-L-ascorbate radical(out) + L-ascorbate(in) = monodehydro-L-ascorbate radical(in) + L-ascorbate(out). Its function is as follows. Plasma membrane reductase that uses cytoplasmic ascorbate as an electron donor to reduce extracellular Fe(3+) into Fe(2+). Probably functions in dietary iron absorption at the brush border of duodenal enterocytes by producing Fe(2+), the divalent form of iron that can be transported into enterocytes. It is also able to reduce extracellular monodehydro-L-ascorbate and may be involved in extracellular ascorbate regeneration by erythrocytes in blood. May also act as a ferrireductase in airway epithelial cells. May also function as a cupric transmembrane reductase. In Rattus norvegicus (Rat), this protein is Plasma membrane ascorbate-dependent reductase CYBRD1.